A 1980-amino-acid polypeptide reads, in one-letter code: Sodium channel protein type 8 subunit alpha (1980 aa).

2 disordered regions span residues 1–20 and 28–62; these read MAARLLAPPGPDSFKPFTPE and RIAESKLKKPPKADGSHREDDEDSKPKPNSDLEAG. Over 1 to 132 the chain is Cytoplasmic; the sequence is MAARLLAPPG…RIAIKILIHS (132 aa). The segment covering 28-61 has biased composition (basic and acidic residues); the sequence is RIAESKLKKPPKADGSHREDDEDSKPKPNSDLEA. The I repeat unit spans residues 114–442; sequence ILSPFNLIRR…KAMLEQLKKQ (329 aa). A helical membrane pass occupies residues 133 to 151; the sequence is VFSMIIMCTILTNCVFMTF. At 152 to 158 the chain is on the extracellular side; it reads SNPPDWS. The helical transmembrane segment at 159-179 threads the bilayer; sequence KNVEYTFTGIYTFESLVKIIA. The Cytoplasmic segment spans residues 180–193; it reads RGFCIDGFTFLRDP. The chain crosses the membrane as a helical span at residues 194-211; the sequence is WNWLDFSVIMMAYITEFV. At 212–217 the chain is on the extracellular side; the sequence is NLGNVS. Asparagine 215 is a glycosylation site (N-linked (GlcNAc...) asparagine). Residues 218-234 traverse the membrane as a helical segment; that stretch reads ALRTFRVLRALKTISVI. At 235–253 the chain is on the cytoplasmic side; sequence PGLKTIVGALIQSVKKLSD. A helical transmembrane segment spans residues 254–273; it reads VMILTVFCLSVFALIGLQLF. Residues 274–355 are Extracellular-facing; it reads MGNLRNKCVV…PNYGYTSFDT (82 aa). A disulfide bond links cysteine 281 and cysteine 333. N-linked (GlcNAc...) asparagine glycosylation is found at asparagine 289, asparagine 295, and asparagine 308. Residue asparagine 326 is glycosylated (N-linked (GlcNAc...) (high mannose) asparagine). The segment at residues 356–380 is an intramembrane region (pore-forming); the sequence is FSWAFLALFRLMTQDYWENLYQLTL. Glutamate 373 is a binding site for Na(+). Residues 381 to 387 are Extracellular-facing; that stretch reads RAAGKTY. Residues 388-408 form a helical membrane-spanning segment; it reads MIFFVLVIFVGSFYLVNLILA. The Cytoplasmic portion of the chain corresponds to 409 to 753; the sequence is VVAMAYEEQN…EIVNLIVMDP (345 aa). 2 disordered regions span residues 446 to 530 and 568 to 602; these read AQAA…KAFR and FRGPGRFRDPGSENEFADDEHSTVEESEGRRDSLF. A compositionally biased stretch (low complexity) spans 474-486; that stretch reads PRSSSEISKLSSK. A compositionally biased stretch (basic residues) spans 489 to 500; it reads KERRNRRKKRKQ. Composition is skewed to basic and acidic residues over residues 501 to 530 and 586 to 602; these read KELSEGEEKGDPEKVFKSESEDGMRRKAFR and DEHSTVEESEGRRDSLF. Phosphoserine is present on residues serine 518 and serine 520. The II repeat unit spans residues 735 to 1007; the sequence is CHPYWIKLKE…QISVIRIKKG (273 aa). A helical transmembrane segment spans residues 754–772; that stretch reads FVDLAITICIVLNTLFMAM. The Extracellular segment spans residues 773-783; that stretch reads EHHPMTPQFEH. Residues 784-803 form a helical membrane-spanning segment; it reads VLAVGNLVFTGIFTAEMFLK. At 804 to 817 the chain is on the cytoplasmic side; it reads LIAMDPYYYFQEGW. The helical transmembrane segment at 818–837 threads the bilayer; the sequence is NIFDGFIVSLSLMELSLADV. Residues 838–839 lie on the Extracellular side of the membrane; the sequence is EG. A helical membrane pass occupies residues 840–857; it reads LSVLRSFRLLRVFKLAKS. Residues 858-873 are Cytoplasmic-facing; it reads WPTLNMLIKIIGNSVG. Residues 874 to 892 form a helical membrane-spanning segment; the sequence is ALGNLTLVLAIIVFIFAVV. The Extracellular segment spans residues 893–921; the sequence is GMQLFGKSYKECVCKINQDCELPRWHMHD. A disulfide bridge links cysteine 906 with cysteine 912. The pore-forming intramembrane region spans 922 to 942; that stretch reads FFHSFLIVFRVLCGEWIETMW. 2 residues coordinate Na(+): glutamate 936 and glutamate 939. Topologically, residues 943–955 are extracellular; sequence DCMEVAGQAMCLI. A disulfide bond links cysteine 944 and cysteine 953. The chain crosses the membrane as a helical span at residues 956–976; that stretch reads VFMMVMVIGNLVVLNLFLALL. The Cytoplasmic portion of the chain corresponds to 977–1199; sequence LSSFSADNLA…TCFLIVEHNW (223 aa). Positions 1107 to 1148 are disordered; that stretch reads NLNTEDVSSESDPEGSKDKLDDTSSSEGSTIDIKPEVEEVPV. The III repeat unit spans residues 1180–1495; sequence LGKSWWILRK…KKYYNAMKKL (316 aa). Residues 1200–1217 traverse the membrane as a helical segment; the sequence is FETFIIFMILLSSGALAF. At 1218–1230 the chain is on the extracellular side; sequence EDIYIEQRKTIRT. The chain crosses the membrane as a helical span at residues 1231 to 1249; the sequence is ILEYADKVFTYIFILEMLL. The Cytoplasmic segment spans residues 1250–1263; that stretch reads KWTAYGFVKFFTNA. The chain crosses the membrane as a helical span at residues 1264 to 1282; sequence WCWLDFLIVAVSLVSLIAN. At 1283 to 1290 the chain is on the extracellular side; that stretch reads ALGYSELG. A helical transmembrane segment spans residues 1291–1309; the sequence is AIKSLRTLRALRPLRALSR. The Cytoplasmic portion of the chain corresponds to 1310–1326; that stretch reads FEGMRVVVNALVGAIPS. Residues 1327 to 1346 form a helical membrane-spanning segment; that stretch reads IMNVLLVCLIFWLIFSIMGV. The Extracellular segment spans residues 1347 to 1399; the sequence is NLFAGKYHYCFNETSEIRFEIEDVNNKTECEKLMEGNNTEIRWKNVKINFDNV. Cysteine 1356 and cysteine 1376 are disulfide-bonded. 3 N-linked (GlcNAc...) asparagine glycosylation sites follow: asparagine 1358, asparagine 1372, and asparagine 1383. The pore-forming intramembrane region spans 1400-1421; that stretch reads GAGYLALLQVATFKGWMDIMYA. The Extracellular segment spans residues 1422-1438; sequence AVDSRKPDEQPKYEDNI. Residues 1439–1460 form a helical membrane-spanning segment; that stretch reads YMYIYFVIFIIFGSFFTLNLFI. Topologically, residues 1461 to 1523 are cytoplasmic; it reads GVIIDNFNQQ…IVFDFVTQQA (63 aa). Phosphoserine; by PKC is present on serine 1497. Residues 1504–1801 form an IV repeat; the sequence is IPRPLNKIQG…WEKFDPDATQ (298 aa). A helical membrane pass occupies residues 1524–1541; that stretch reads FDIVIMMLICLNMVTMMV. Residues 1542 to 1552 are Extracellular-facing; that stretch reads ETDTQSKQMEN. The helical transmembrane segment at 1553–1571 threads the bilayer; the sequence is ILYWINLVFVIFFTCECVL. Residues 1572 to 1583 lie on the Cytoplasmic side of the membrane; the sequence is KMFALRHYYFTI. A helical membrane pass occupies residues 1584-1601; it reads GWNIFDFVVVILSIVGMF. Residues 1602–1614 lie on the Extracellular side of the membrane; it reads LADIIEKYFVSPT. Residues 1615 to 1631 form a helical membrane-spanning segment; it reads LFRVIRLARIGRILRLI. Over 1632–1650 the chain is Cytoplasmic; the sequence is KGAKGIRTLLFALMMSLPA. The chain crosses the membrane as a helical span at residues 1651–1668; it reads LFNIGLLLFLVMFIFSIF. The Extracellular segment spans residues 1669 to 1690; the sequence is GMSNFAYVKHEAGIDDMFNFET. Residues 1691–1713 constitute an intramembrane region (pore-forming); it reads FGNSMICLFQITTSAGWDGLLLP. Over 1714 to 1742 the chain is Extracellular; the sequence is ILNRPPDCSLDKEHPGSGFKGDCGNPSVG. A disulfide bridge connects residues cysteine 1721 and cysteine 1736. The helical transmembrane segment at 1743-1765 threads the bilayer; that stretch reads IFFFVSYIIISFLIVVNMYIAII. Over 1766 to 1980 the chain is Cytoplasmic; it reads LENFSVATEE…RQKEVRESKC (215 aa). One can recognise an IQ domain in the interval 1895–1924; the sequence is EEVSAVVLQRAYRGHLARRGFICKKTTSNK. Positions 1922–1980 are disordered; sequence SNKLENGGTHREKKESTPSTASLPSYDSVTKPEKEKQQRAEEGRRERAKRQKEVRESKC. Polar residues predominate over residues 1938-1949; it reads TPSTASLPSYDS. The span at 1951 to 1980 shows a compositional bias: basic and acidic residues; the sequence is TKPEKEKQQRAEEGRRERAKRQKEVRESKC.

This sequence belongs to the sodium channel (TC 1.A.1.10) family. Nav1.6/SCN8A subfamily. As to quaternary structure, the voltage-sensitive sodium channel consists of an ion-conducting pore-forming alpha subunit regulated by one or more beta-1 (SCN1B), beta-2 (SCN2B), beta-3 (SCN3B) and/or beta-4 (SCN4B) subunits. Beta-1 (SCN1B) and beta-3 (SCN3B) are non-covalently associated with alpha, while beta-2 (SCN2B) and beta-4 (SCN4B) are covalently linked by disulfide bonds. Interacts with NEDD4 and NEDD4L. Interacts with FGF13. Interacts with FGF14, GBG3, GBB2 and SCN1B. Interacts with TMEM233. Interacts with the conotoxin GVIIJ. Interacts with the spider beta/delta-theraphotoxin-Pre1a. Interacts with CALM1; the interaction modulates the inactivation rate of SCN8A. May be ubiquitinated by NEDD4L; which would promote its endocytosis. In terms of processing, phosphorylation at Ser-1497 by PKC in a highly conserved cytoplasmic loop slows inactivation of the sodium channel and reduces peak sodium currents. In terms of tissue distribution, expressed in the hippocampus with increased expression in epileptic tissue compared to normal adjacent tissue (at protein level). As to expression, expressed in non-neuronal tissues, such as monocytes/macrophages.

The protein localises to the cell membrane. Its subcellular location is the cell projection. The protein resides in the axon. It is found in the cytoplasmic vesicle. It localises to the podosome. The catalysed reaction is Na(+)(in) = Na(+)(out). With respect to regulation, inhibited by tetrodotoxin and, more weakly, by its metabolite 4,9-ah-tetrodotoxin. Its function is as follows. Pore-forming subunit of a voltage-gated sodium channel complex assuming opened or closed conformations in response to the voltage difference across membranes and through which sodium ions selectively pass along their electrochemical gradient. Contributes to neuronal excitability by regulating action potential threshold and propagation. More specifically expressed in non-neuronal cells, could play a role in sodium release from intracellular compartments and participate in the control of podosomes formation and macrophages adhesion and movement. The sequence is that of Sodium channel protein type 8 subunit alpha from Homo sapiens (Human).